We begin with the raw amino-acid sequence, 602 residues long: 4-hydroxy-3-methylbut-2-en-1-yl diphosphate synthase (flavodoxin) (602 aa).

C508, C511, C543, and E550 together coordinate [4Fe-4S] cluster.

This sequence belongs to the IspG family. [4Fe-4S] cluster is required as a cofactor.

The enzyme catalyses (2E)-4-hydroxy-3-methylbut-2-enyl diphosphate + oxidized [flavodoxin] + H2O + 2 H(+) = 2-C-methyl-D-erythritol 2,4-cyclic diphosphate + reduced [flavodoxin]. Its pathway is isoprenoid biosynthesis; isopentenyl diphosphate biosynthesis via DXP pathway; isopentenyl diphosphate from 1-deoxy-D-xylulose 5-phosphate: step 5/6. In terms of biological role, converts 2C-methyl-D-erythritol 2,4-cyclodiphosphate (ME-2,4cPP) into 1-hydroxy-2-methyl-2-(E)-butenyl 4-diphosphate. This is 4-hydroxy-3-methylbut-2-en-1-yl diphosphate synthase (flavodoxin) from Chlamydia trachomatis serovar L2b (strain UCH-1/proctitis).